The following is a 648-amino-acid chain: Biosynthetic arginine decarboxylase (648 aa).

At lysine 109 the chain carries N6-(pyridoxal phosphate)lysine. 291-301 (IDVGGGLGIDF) is a binding site for substrate.

Belongs to the Orn/Lys/Arg decarboxylase class-II family. SpeA subfamily. The cofactor is Mg(2+). Requires pyridoxal 5'-phosphate as cofactor.

The enzyme catalyses L-arginine + H(+) = agmatine + CO2. The protein operates within amine and polyamine biosynthesis; agmatine biosynthesis; agmatine from L-arginine: step 1/1. Functionally, catalyzes the biosynthesis of agmatine from arginine. This Prochlorococcus marinus (strain MIT 9312) protein is Biosynthetic arginine decarboxylase.